The sequence spans 214 residues: MTSETVSPSSFGASPETAVVAALAGRSLALVGMMGAGKSTIGRRLAARLRMRFVDADAEIELAAGMPIPEIFETHGEPHFRDGEARVIARLLNGGPIVLATGGGAVLREETRARLSERAVSIWLKADAEVILRRVRRRADRPLLQTADPAATIKRLIAEREPIYRQADITVASRDVPYEWIVDECIGLLHRRLCRGEMTRNAMKDPDEGFDTTQ.

ATP is bound at residue 35 to 40; sequence GAGKST. Position 39 (Ser-39) interacts with Mg(2+). Substrate is bound by residues Asp-57, Arg-81, and Gly-103. Arg-141 is an ATP binding site. Arg-160 is a substrate binding site.

Belongs to the shikimate kinase family. As to quaternary structure, monomer. Mg(2+) serves as cofactor.

It localises to the cytoplasm. It catalyses the reaction shikimate + ATP = 3-phosphoshikimate + ADP + H(+). Its pathway is metabolic intermediate biosynthesis; chorismate biosynthesis; chorismate from D-erythrose 4-phosphate and phosphoenolpyruvate: step 5/7. Catalyzes the specific phosphorylation of the 3-hydroxyl group of shikimic acid using ATP as a cosubstrate. The polypeptide is Shikimate kinase (Nitrobacter winogradskyi (strain ATCC 25391 / DSM 10237 / CIP 104748 / NCIMB 11846 / Nb-255)).